A 435-amino-acid polypeptide reads, in one-letter code: Serine--tRNA ligase (435 aa).

241–243 serves as a coordination point for L-serine; the sequence is TAE. Position 272-274 (272-274) interacts with ATP; sequence RAE. Glu-295 provides a ligand contact to L-serine. 359–362 provides a ligand contact to ATP; that stretch reads EISS. Ser-395 serves as a coordination point for L-serine.

Belongs to the class-II aminoacyl-tRNA synthetase family. Type-1 seryl-tRNA synthetase subfamily. As to quaternary structure, homodimer. The tRNA molecule binds across the dimer.

The protein resides in the cytoplasm. It carries out the reaction tRNA(Ser) + L-serine + ATP = L-seryl-tRNA(Ser) + AMP + diphosphate + H(+). The enzyme catalyses tRNA(Sec) + L-serine + ATP = L-seryl-tRNA(Sec) + AMP + diphosphate + H(+). It functions in the pathway aminoacyl-tRNA biosynthesis; selenocysteinyl-tRNA(Sec) biosynthesis; L-seryl-tRNA(Sec) from L-serine and tRNA(Sec): step 1/1. Catalyzes the attachment of serine to tRNA(Ser). Is also able to aminoacylate tRNA(Sec) with serine, to form the misacylated tRNA L-seryl-tRNA(Sec), which will be further converted into selenocysteinyl-tRNA(Sec). The chain is Serine--tRNA ligase from Haemophilus ducreyi (strain 35000HP / ATCC 700724).